The chain runs to 1837 residues: AF4/FMR2 family member lilli (1837 aa).

Disordered stretches follow at residues 1–25 (MAQQ…QQQQ), 65–109 (NLYS…PRRL), 162–295 (IQQQ…LHNG), 455–592 (QQLP…KKKY), 605–712 (TGLL…PGNV), 797–852 (PKSQ…LQIP), 868–1250 (NNMQ…GGAK), 1267–1311 (QQQQ…GLAS), and 1344–1466 (APSS…DPML). Positions 16-25 (HQQQQQQQQQ) are enriched in low complexity. Positions 84-109 (REKYERQQGIQSDDRETSLFSEPRRL) are enriched in basic and acidic residues. Low complexity-rich tracts occupy residues 162–179 (IQQQ…VASS), 187–200 (QTQQ…QQQQ), and 247–264 (NSNS…SSSS). Phosphothreonine is present on T468. Positions 475-488 (LKIEKNPILEKQDS) are enriched in basic and acidic residues. Acidic residues predominate over residues 490-500 (LENDLELSESE). 2 positions are modified to phosphoserine: S497 and S499. 2 stretches are compositionally biased toward low complexity: residues 509-529 (SPGS…SESS) and 542-552 (QQQQQTQQQQL). Positions 553–563 (HGHHPQSHHHQ) are enriched in basic residues. Positions 564 to 583 (QFLQQQLQRQQQQQQQQQQL) are enriched in low complexity. Gly residues-rich tracts occupy residues 612–633 (GGLG…GNGG) and 641–673 (GSMG…GIGS). Polar residues-rich tracts occupy residues 678–690 (NKTP…NKWN) and 698–711 (PTSQ…SPGN). Positions 815–837 (SESATSGSSSSSCSSSDSAASAS) are enriched in low complexity. Residues 868 to 880 (NNMQKSQSMSVTV) show a composition bias toward polar residues. Positions 892 to 902 (PRQKKPRKKKM) are enriched in basic residues. S913 and S914 each carry phosphoserine. Composition is skewed to low complexity over residues 927–951 (VVAQ…ATTT) and 961–1013 (QQQQ…SSVL). Residues 952–964 (KKGRGRPRKQQQQ) constitute a DNA-binding region (a.T hook). Residues S974 and S976 each carry the phosphoserine modification. The segment covering 1021 to 1033 (SQSSSNGNTPTKK) has biased composition (polar residues). Composition is skewed to low complexity over residues 1034–1049 (MSSI…SAAA), 1056–1091 (AVAA…SSSS), 1130–1139 (GSSSPTSSSS), and 1157–1173 (ISNS…VNNN). Positions 1174-1184 (LQQQAMPQQSP) are enriched in polar residues. Low complexity predominate over residues 1189 to 1212 (LSGGSQQLSSSDSSSSSSGSSSSS). The segment covering 1217-1234 (DAKREKNRERKPKSDKNK) has biased composition (basic and acidic residues). The segment covering 1267–1276 (QQQQQQQQVQ) has biased composition (low complexity). The span at 1345 to 1355 (PSSSNQQNGHL) shows a compositional bias: polar residues. Positions 1373 to 1386 (KVKHEHHQLHHHSQ) are enriched in basic residues. 2 stretches are compositionally biased toward basic and acidic residues: residues 1393–1407 (VKPE…ETKF) and 1416–1432 (FQLK…ERDQ). Position 1517 is a phosphoserine (S1517). Positions 1550–1560 (AVQTTPPTSVT) are enriched in polar residues. Disordered stretches follow at residues 1550 to 1571 (AVQT…LVSQ) and 1727 to 1756 (GNTP…IVPQ). The segment covering 1727–1747 (GNTPSSISPSNSVGSQGSGSN) has biased composition (low complexity).

This sequence belongs to the AF4 family.

It localises to the nucleus. In terms of biological role, has a role in transcriptional regulation. Acts in parallel with the Ras/MAPK and the PI3K/PKB pathways in the control of cell identity and cellular growth. Essential for regulation of the cytoskeleton and cell growth but not for cell proliferation or growth rate. Required specifically for the microtubule-based basal transport of lipid droplets. Plays a partially redundant function downstream of Raf in cell fate specification in the developing eye. Pair-rule protein that regulates embryonic cellularization, gastrulation and segmentation. This is AF4/FMR2 family member lilli from Drosophila willistoni (Fruit fly).